Here is a 594-residue protein sequence, read N- to C-terminus: Proteasome-associated ATPase (594 aa).

The span at 1–10 (MMETPNNDSS) shows a compositional bias: polar residues. A disordered region spans residues 1-23 (MMETPNNDSSRTPDEAAGAPDPE). Positions 35-86 (ADRQVNILRDKLRHIDRQLAAATQNNSKLVGMLETAKAEILRLKNALDQEGQ) form a coiled coil. ATP is bound at residue 282-287 (GCGKTL). The docks into pockets in the proteasome alpha-ring stretch occupies residues 593–594 (YL).

It belongs to the AAA ATPase family. In terms of assembly, homohexamer. Assembles into a hexameric ring structure that caps the 20S proteasome core. Strongly interacts with the prokaryotic ubiquitin-like protein Pup through a hydrophobic interface; the interacting region of ARC lies in its N-terminal coiled-coil domain. There is one Pup binding site per ARC hexamer ring. Upon ATP-binding, the C-terminus of ARC interacts with the alpha-rings of the proteasome core, possibly by binding to the intersubunit pockets.

It functions in the pathway protein degradation; proteasomal Pup-dependent pathway. In terms of biological role, ATPase which is responsible for recognizing, binding, unfolding and translocation of pupylated proteins into the bacterial 20S proteasome core particle. May be essential for opening the gate of the 20S proteasome via an interaction with its C-terminus, thereby allowing substrate entry and access to the site of proteolysis. Thus, the C-termini of the proteasomal ATPase may function like a 'key in a lock' to induce gate opening and therefore regulate proteolysis. This is Proteasome-associated ATPase from Arthrobacter sp. (strain FB24).